Consider the following 734-residue polypeptide: MALRFPRFSQGLAQDPTTRRIWFGIATAHDFESHDDITEERLYQNIFASHFGQLAIIFLWTSGNLFHVAWQGNFESWVQDPLHVRPIAHAIWDPHFGQPAVEAFTRGGAPGPVNIAYSGVYQWWYTIGLRTNEDLYTGALFLLFISAISLIAGWLHLQPKWKPSVSWFKNAESRLNHHLSGLFGVSSLAWTGHLVHVAIPASRGESVRWNNFLDVLPHPQGLGPLFTGQWNLYAQNPDSSSHLFGTSQGAGTAILTLLGGFHPQTQSLWLTDMAHHHLAIAFIFLIAGHMYRTNFGIGHSMKDLLDAHIPPGGRLGRGHKGLYDTINNSIHFQLGLALASLGVITSLVAQHMYSLPAYAFIAQDFTTQAALYTHHQYIAGFIMTGAFAHGAIFFIRDYNPEQNEDNVLARMLEHKEAIISHLSWASLFLGFHTLGLYVHNDVMLAFGTPEKQILIEPIFAQWIQSAHGKTSYGFDILLSSTSGPAFNAGRSIWLPGWLNAVNENSNSLFLTIGPGDFLVHHAIALGLHTTTLILVKGALDARGSKLMPDKKDFGYSFPCDGPGRGGTCDISAWDAFYLAVFWMLNTIGWVTFYWHWKHITLWQGNVSQFNESSTYLMGWLRDYLWLNSSQLINGYNPFGMNSLSVWAWMFLFGHLVWATGFMFLISWRGYWQELIETLAWAHERTPLANLIRWRDKPVALSIVQARLVGLAHFSVGYIFTYAAFLIASTSGKFG.

8 helical membrane-spanning segments follow: residues 46 to 69 (IFAS…FHVA), 135 to 158 (LYTG…LHLQ), 175 to 199 (LNHH…HVAI), 273 to 291 (MAHH…GHMY), 330 to 353 (IHFQ…QHMY), 369 to 395 (AALY…IFFI), 417 to 439 (AIIS…LYVH), and 517 to 535 (FLVH…LILV). Cysteine 559 and cysteine 568 together coordinate [4Fe-4S] cluster. 2 helical membrane-spanning segments follow: residues 575 to 596 (AFYL…YWHW) and 643 to 665 (LSVW…MFLI). Residues histidine 654, methionine 662, and tyrosine 670 each coordinate chlorophyll a. Tryptophan 671 provides a ligand contact to phylloquinone. The helical transmembrane segment at 707 to 727 (LVGLAHFSVGYIFTYAAFLIA) threads the bilayer.

It belongs to the PsaA/PsaB family. As to quaternary structure, the PsaA/B heterodimer binds the P700 chlorophyll special pair and subsequent electron acceptors. PSI consists of a core antenna complex that captures photons, and an electron transfer chain that converts photonic excitation into a charge separation. The eukaryotic PSI reaction center is composed of at least 11 subunits. It depends on P700 is a chlorophyll a/chlorophyll a' dimer, A0 is one or more chlorophyll a, A1 is one or both phylloquinones and FX is a shared 4Fe-4S iron-sulfur center. as a cofactor.

Its subcellular location is the plastid. It is found in the chloroplast thylakoid membrane. The enzyme catalyses reduced [plastocyanin] + hnu + oxidized [2Fe-2S]-[ferredoxin] = oxidized [plastocyanin] + reduced [2Fe-2S]-[ferredoxin]. PsaA and PsaB bind P700, the primary electron donor of photosystem I (PSI), as well as the electron acceptors A0, A1 and FX. PSI is a plastocyanin-ferredoxin oxidoreductase, converting photonic excitation into a charge separation, which transfers an electron from the donor P700 chlorophyll pair to the spectroscopically characterized acceptors A0, A1, FX, FA and FB in turn. Oxidized P700 is reduced on the lumenal side of the thylakoid membrane by plastocyanin. The polypeptide is Photosystem I P700 chlorophyll a apoprotein A2 (Helianthus annuus (Common sunflower)).